The sequence spans 77 residues: Putative snRNP Sm-like protein (77 aa).

Positions 8-77 constitute a Sm domain; that stretch reads PTLRMMLDYV…DSVVVITPAA (70 aa).

This sequence belongs to the snRNP Sm proteins family.

This Aeropyrum pernix (strain ATCC 700893 / DSM 11879 / JCM 9820 / NBRC 100138 / K1) protein is Putative snRNP Sm-like protein.